A 357-amino-acid chain; its full sequence is Acyl-coenzyme A diphosphatase NUDT19 (357 aa).

The 233-residue stretch at 10-242 (AATVMLAAGW…IWLAPPQFYE (233 aa)) folds into the Nudix hydrolase domain. The disordered stretch occupies residues 72–93 (PRFGLGPEPPRQPPFPGLSHGD). Pro residues predominate over residues 78 to 87 (PEPPRQPPFP). Residues 97 to 118 (AALPDDVALRICAIREAFEEAG) carry the Nudix box motif. Residues Glu-112 and Glu-116 each coordinate Mg(2+). Lys-300 bears the N6-succinyllysine mark. The Microbody targeting signal motif lies at 355 to 357 (AHL).

Belongs to the Nudix hydrolase family. Monomer. Requires Mg(2+) as cofactor. It depends on Mn(2+) as a cofactor. Highly expressed in the kidneys, with lower levels in skeletal muscle and brain (at protein level).

The protein localises to the peroxisome. The enzyme catalyses an acyl-CoA + H2O = an acyl-4'-phosphopantetheine + adenosine 3',5'-bisphosphate + 2 H(+). The catalysed reaction is CoA + H2O = (R)-4'-phosphopantetheine + adenosine 3',5'-bisphosphate + 2 H(+). It catalyses the reaction hexanoyl-CoA + H2O = hexanoyl-4'-phosphopantetheine + adenosine 3',5'-bisphosphate + 2 H(+). It carries out the reaction octanoyl-CoA + H2O = S-octanoyl-4'-phosphopantetheine + adenosine 3',5'-bisphosphate + 2 H(+). The enzyme catalyses butanoyl-CoA + H2O = S-butanoyl-4'-phosphopantetheine + adenosine 3',5'-bisphosphate + 2 H(+). The catalysed reaction is propanoyl-CoA + H2O = propanoyl-4'-phosphopantetheine + adenosine 3',5'-bisphosphate + 2 H(+). It catalyses the reaction malonyl-CoA + H2O = malonyl-4'-phosphopantetheine + adenosine 3',5'-bisphosphate + 2 H(+). It carries out the reaction succinyl-CoA + H2O = succinyl-4'-phosphopantetheine + adenosine 3',5'-bisphosphate + 2 H(+). The enzyme catalyses choloyl-CoA + H2O = S-choloyl-4'-phosphopantetheine + adenosine 3',5'-bisphosphate + 2 H(+). The catalysed reaction is 4,8-dimethylnonanoyl-CoA + H2O = S-(4,8-dimethylnonanoyl)-4'-phosphopantetheine + adenosine 3',5'-bisphosphate + 2 H(+). It catalyses the reaction (9Z,12Z,15Z)-octadecatrienoyl-CoA + H2O = S-(9Z,12Z,15Z-octadecatrienoyl)-4'-phosphopantetheine + adenosine 3',5'-bisphosphate + 2 H(+). It carries out the reaction (9Z,12Z)-octadecadienoyl-CoA + H2O = S-(9Z,12Z-octadecadienoyl)-4'-phosphopantetheine + adenosine 3',5'-bisphosphate + 2 H(+). The enzyme catalyses (9Z)-hexadecenoyl-CoA + H2O = S-(9Z-hexadecenoyl)-4'-phosphopantetheine + adenosine 3',5'-bisphosphate + 2 H(+). The catalysed reaction is (9Z)-tetradecenoyl-CoA + H2O = S-(9Z-tetradecenoyl)-4'-phosphopantetheine + adenosine 3',5'-bisphosphate + 2 H(+). It catalyses the reaction (6Z)-octenoyl-CoA + H2O = S-(6Z-octenoyl)-4'-phosphopantetheine + adenosine 3',5'-bisphosphate + 2 H(+). It carries out the reaction hexadecanoyl-CoA + H2O = S-hexadecanoyl-4'-phosphopantetheine + adenosine 3',5'-bisphosphate + 2 H(+). The enzyme catalyses tetradecanoyl-CoA + H2O = tetradecanoyl-4'-phosphopantetheine + adenosine 3',5'-bisphosphate + 2 H(+). The catalysed reaction is dodecanoyl-CoA + H2O = S-dodecanoyl-4'-phosphopantetheine + adenosine 3',5'-bisphosphate + 2 H(+). It catalyses the reaction a 5'-end CoA-ribonucleoside in mRNA + H2O = a 5'-end phospho-adenosine-phospho-ribonucleoside in mRNA + (R)-4'-phosphopantetheine + 2 H(+). Its activity is regulated as follows. Inhibited by chenodeoxycholic acid (CDCA) and its conjugated derivatives, taurochenodeoxycholic acid and glycochenodeoxycholic acid. Inhibited by fluoride. In terms of biological role, fatty acyl-coenzyme A (CoA) diphosphatase that hydrolyzes fatty acyl-CoA to yield acyl-4'-phosphopantetheine and adenosine 3',5'-bisphosphate. Mediates the hydrolysis of a wide range of CoA esters, including choloyl-CoA and branched-chain fatty-acyl-CoA esters and at low substrate concentrations medium and long-chain fatty-acyl-CoA esters are the primary substrates. Highest activity seen with medium-chain acyl-CoA esters and higher rates of activity seen with the unsaturated acyl-CoA esters compared with the saturated esters. Exhibits decapping activity towards dpCoA-capped RNAs in vitro. The chain is Acyl-coenzyme A diphosphatase NUDT19 (Nudt19) from Mus musculus (Mouse).